The chain runs to 609 residues: Elongation factor 4 (609 aa).

Residues 11–193 (SRIRNFSIIA…QIVEKVPAPS (183 aa)) form the tr-type G domain. GTP-binding positions include 23–28 (DHGKST) and 140–143 (NKID).

Belongs to the TRAFAC class translation factor GTPase superfamily. Classic translation factor GTPase family. LepA subfamily.

Its subcellular location is the cell membrane. The catalysed reaction is GTP + H2O = GDP + phosphate + H(+). Its function is as follows. Required for accurate and efficient protein synthesis under certain stress conditions. May act as a fidelity factor of the translation reaction, by catalyzing a one-codon backward translocation of tRNAs on improperly translocated ribosomes. Back-translocation proceeds from a post-translocation (POST) complex to a pre-translocation (PRE) complex, thus giving elongation factor G a second chance to translocate the tRNAs correctly. Binds to ribosomes in a GTP-dependent manner. In Halalkalibacterium halodurans (strain ATCC BAA-125 / DSM 18197 / FERM 7344 / JCM 9153 / C-125) (Bacillus halodurans), this protein is Elongation factor 4.